The primary structure comprises 547 residues: Chaperonin GroEL (547 aa).

Residues 30–33, lysine 51, 87–91, glycine 415, and aspartate 496 contribute to the ATP site; these read TLGP and DGTTT.

It belongs to the chaperonin (HSP60) family. Forms a cylinder of 14 subunits composed of two heptameric rings stacked back-to-back. Interacts with the co-chaperonin GroES.

It is found in the cytoplasm. The enzyme catalyses ATP + H2O + a folded polypeptide = ADP + phosphate + an unfolded polypeptide.. In terms of biological role, together with its co-chaperonin GroES, plays an essential role in assisting protein folding. The GroEL-GroES system forms a nano-cage that allows encapsulation of the non-native substrate proteins and provides a physical environment optimized to promote and accelerate protein folding. This chain is Chaperonin GroEL, found in Chlorobaculum parvum (strain DSM 263 / NCIMB 8327) (Chlorobium vibrioforme subsp. thiosulfatophilum).